The primary structure comprises 1349 residues: DNA-directed RNA polymerase subunit beta' (1349 aa).

Positions 219, 293, 300, and 303 each coordinate Zn(2+). The interval 1298 to 1349 is disordered; the sequence is LDSPTLGESGFGSRRAERSVLDDEDELIADEVVDDDDFEEEEEDDEDDFDDE. A compositionally biased stretch (acidic residues) spans 1319–1349; it reads DDEDELIADEVVDDDDFEEEEEDDEDDFDDE.

It belongs to the RNA polymerase beta' chain family. RpoC2 subfamily. In cyanobacteria the RNAP catalytic core is composed of 2 alpha, 1 beta, 1 beta', 1 gamma and 1 omega subunit. When a sigma factor is associated with the core the holoenzyme is formed, which can initiate transcription. It depends on Zn(2+) as a cofactor.

The catalysed reaction is RNA(n) + a ribonucleoside 5'-triphosphate = RNA(n+1) + diphosphate. Its function is as follows. DNA-dependent RNA polymerase catalyzes the transcription of DNA into RNA using the four ribonucleoside triphosphates as substrates. In Nostoc punctiforme (strain ATCC 29133 / PCC 73102), this protein is DNA-directed RNA polymerase subunit beta'.